Consider the following 737-residue polypeptide: Prospero homeobox protein 1 (737 aa).

The interaction with RORG stretch occupies residues 1 to 28 (MPDHDSTALLSRQTKRRRVDIGVKRTVG). Over residues 103 to 135 (KNGGTEPSFQASGLSSTGSEVHQEDICSNSSRD) the composition is skewed to polar residues. The disordered stretch occupies residues 103-149 (KNGGTEPSFQASGLSSTGSEVHQEDICSNSSRDSPPECLSPFGRPTM). Residues Ser-177, Ser-179, and Ser-199 each carry the phosphoserine modification. The segment at 178 to 242 (HSPSVALRGN…REERRQLKQQ (65 aa)) is disordered. Residues 213 to 223 (LPQQQQQSFQQ) are compositionally biased toward low complexity. Positions 227-242 (ARKEQKREERRQLKQQ) are enriched in basic and acidic residues. Phosphoserine occurs at positions 291 and 295. Residues 320-337 (MAENKPKREGNNKERDHG) show a composition bias toward basic and acidic residues. 2 disordered regions span residues 320 to 344 (MAENKPKREGNNKERDHGPNSLQPE) and 445 to 476 (KNSSDQSASGPAAGGHHQPLHQSPLSATTGFT). Residue Lys-324 forms a Glycyl lysine isopeptide (Lys-Gly) (interchain with G-Cter in SUMO2) linkage. Residues 464–476 (LHQSPLSATTGFT) are compositionally biased toward polar residues. Ser-511, Ser-514, and Ser-557 each carry phosphoserine. Positions 577-635 (QEGLSPNHLKKAKLMFFYTRYPSSNMLKTYFSDVKFNRCITSQLIKWFSNFREFYYIQM) constitute a Prospero-type homeo domain. The interval 577–735 (QEGLSPNHLK…KSPNCLQELL (159 aa)) is homeo-Prospero. In terms of domain architecture, Prospero spans 636-735 (EKYARQAIND…KSPNCLQELL (100 aa)). The essential for nuclear localization, interaction with RORG, repression of RORG transcriptional activator activity stretch occupies residues 723-729 (EIFKSPN).

This sequence belongs to the Prospero homeodomain family. As to quaternary structure, interacts with RORA and RORG (via AF-2 motif). Most actively expressed in the developing lens. Detected also in embryonic brain, lung, liver and kidney. In adult, it is more abundant in heart and liver than in brain, skeletal muscle, kidney and pancreas.

The protein resides in the nucleus. In terms of biological role, transcription factor involved in developmental processes such as cell fate determination, gene transcriptional regulation and progenitor cell regulation in a number of organs. Plays a critical role in embryonic development and functions as a key regulatory protein in neurogenesis and the development of the heart, eye lens, liver, pancreas and the lymphatic system. Involved in the regulation of the circadian rhythm. Represses: transcription of the retinoid-related orphan receptor RORG, transcriptional activator activity of RORA and RORG and the expression of RORA/G-target genes including core clock components: BMAL1, NPAS2 and CRY1 and metabolic genes: AVPR1A and ELOVL3. This chain is Prospero homeobox protein 1 (PROX1), found in Homo sapiens (Human).